The chain runs to 161 residues: SsrA-binding protein (161 aa).

The segment at 138 to 161 is disordered; that stretch reads DKRTDSKEKDWNRDKARIMKSSLR. Positions 139 to 154 are enriched in basic and acidic residues; that stretch reads KRTDSKEKDWNRDKAR.

The protein belongs to the SmpB family.

The protein resides in the cytoplasm. Required for rescue of stalled ribosomes mediated by trans-translation. Binds to transfer-messenger RNA (tmRNA), required for stable association of tmRNA with ribosomes. tmRNA and SmpB together mimic tRNA shape, replacing the anticodon stem-loop with SmpB. tmRNA is encoded by the ssrA gene; the 2 termini fold to resemble tRNA(Ala) and it encodes a 'tag peptide', a short internal open reading frame. During trans-translation Ala-aminoacylated tmRNA acts like a tRNA, entering the A-site of stalled ribosomes, displacing the stalled mRNA. The ribosome then switches to translate the ORF on the tmRNA; the nascent peptide is terminated with the 'tag peptide' encoded by the tmRNA and targeted for degradation. The ribosome is freed to recommence translation, which seems to be the essential function of trans-translation. In Aliivibrio fischeri (strain MJ11) (Vibrio fischeri), this protein is SsrA-binding protein.